Consider the following 366-residue polypeptide: Apolipoprotein A-V (366 aa).

Positions 1 to 23 (MASMAAVLTWALALLSAFSATQA) are cleaved as a signal peptide. Coiled coils occupy residues 54–157 (ATLK…VGED) and 236–262 (TLKA…RAFA). Thr55 is subject to Phosphothreonine; by FAM20C. Ser59 carries the post-translational modification Phosphoserine.

Belongs to the apolipoprotein A1/A4/E family. Interacts with GPIHBP1. Interacts with SORL1; this interaction leads to APOA5 internalization and sorting either to lysosomes and degradation, or to the trans-Golgi network. Phosphorylated by FAM20C in the extracellular medium. Liver and plasma.

The protein localises to the secreted. It localises to the early endosome. Its subcellular location is the late endosome. The protein resides in the golgi apparatus. It is found in the trans-Golgi network. Its function is as follows. Minor apolipoprotein mainly associated with HDL and to a lesser extent with VLDL. May also be associated with chylomicrons. Important determinant of plasma triglyceride (TG) levels by both being a potent stimulator of apo-CII lipoprotein lipase (LPL) TG hydrolysis and an inhibitor of the hepatic VLDL-TG production rate (without affecting the VLDL-apoB production rate). Activates poorly lecithin:cholesterol acyltransferase (LCAT) and does not enhance efflux of cholesterol from macrophages. Binds heparin. In Homo sapiens (Human), this protein is Apolipoprotein A-V (APOA5).